A 679-amino-acid polypeptide reads, in one-letter code: UvrABC system protein B (679 aa).

Residues 31-414 (ENLTDGLAHQ…ELEKSGTEII (384 aa)) form the Helicase ATP-binding domain. ATP is bound at residue 44–51 (GVTGSGKT). Residues 97–120 (YYDYYQPEAYVPSSDTFIEKDASI) carry the Beta-hairpin motif. The Helicase C-terminal domain maps to 436-589 (QVDDLLSEAR…QIKYNEEHGI (154 aa)). The 36-residue stretch at 639 to 674 (QQQIKKLEQQMYKFAQDLEFEKAAAIRDQLHQLREQ) folds into the UVR domain.

The protein belongs to the UvrB family. In terms of assembly, forms a heterotetramer with UvrA during the search for lesions. Interacts with UvrC in an incision complex.

The protein resides in the cytoplasm. The UvrABC repair system catalyzes the recognition and processing of DNA lesions. A damage recognition complex composed of 2 UvrA and 2 UvrB subunits scans DNA for abnormalities. Upon binding of the UvrA(2)B(2) complex to a putative damaged site, the DNA wraps around one UvrB monomer. DNA wrap is dependent on ATP binding by UvrB and probably causes local melting of the DNA helix, facilitating insertion of UvrB beta-hairpin between the DNA strands. Then UvrB probes one DNA strand for the presence of a lesion. If a lesion is found the UvrA subunits dissociate and the UvrB-DNA preincision complex is formed. This complex is subsequently bound by UvrC and the second UvrB is released. If no lesion is found, the DNA wraps around the other UvrB subunit that will check the other stand for damage. The chain is UvrABC system protein B from Haemophilus influenzae (strain 86-028NP).